The primary structure comprises 105 residues: Large ribosomal subunit protein eL42 (105 aa).

The interval 28-57 (YKKGKDSLAAQGKRRYDRKQSGYGGQTKPV) is disordered.

It belongs to the eukaryotic ribosomal protein eL42 family.

The sequence is that of Large ribosomal subunit protein eL42 (RPL44) from Gossypium hirsutum (Upland cotton).